We begin with the raw amino-acid sequence, 439 residues long: FAD-linked oxidoreductase phmC (439 aa).

Residues 1-19 (MLSSILLTIFCAFLSSTGA) form the signal peptide. Residues Asn29 and Asn84 are each glycosylated (N-linked (GlcNAc...) asparagine). Positions 89 to 272 (QGSVPSYYIQ…LSTTTRVEPK (184 aa)) constitute an FAD-binding PCMH-type domain. Residues Asn285 and Asn300 are each glycosylated (N-linked (GlcNAc...) asparagine).

This sequence belongs to the oxygen-dependent FAD-linked oxidoreductase family. FAD serves as cofactor.

It functions in the pathway mycotoxin biosynthesis. FAD-linked oxidoreductase; part of the gene cluster that mediates the biosynthesis of the mycotoxins phomacins, leucine-derived cytochalasans with potent actin polymerization-inhibitory activities and monocot-specific antigerminative activities. The first step in the pathway is catalyzed by the hybrid PKS-NRPS phmA, assisted by the enoyl reductase phmE, that are responsible for fusion of the leucine precursor and the polyketide backbone to produce a 2-pyrrolidone intermediate. The polyketide synthase module (PKS) of phmA is responsible for the synthesis of the polyketide backbone and the downstream nonribosomal peptide synthetase (NRPS) amidates the carboxyl end of the polyketide with the leucine precursor. Because phmA lacks a designated enoylreductase (ER) domain, the required activity is provided the enoyl reductase phmE. Reduction by the hydrolyase phmG, followed by dehydration and intra-molecular Diels-Alder cyclization by the Diels-Alderase phmD then yield the required isoindolone-fused macrocycle. A number of oxidative steps catalyzed by the tailoring cytochrome P450 monooxygenase phmB, the FAD-linked oxidoreductase phmC and the short-chain dehydrogenase/reductase phmF, are further required to afford the final products, phomacin D and phomacin E. The chain is FAD-linked oxidoreductase phmC from Phaeosphaeria nodorum (strain SN15 / ATCC MYA-4574 / FGSC 10173) (Glume blotch fungus).